Here is a 205-residue protein sequence, read N- to C-terminus: uncharacterized protein (205 aa).

Helical transmembrane passes span 5–25 (VWLAYLLTAVVFSLAPGSGTV), 41–61 (GAIIGLQIGLACHIVLVGIGI), 68–88 (SALAFTLIKWIGAAYLVWLGI), 117–137 (LINLTNPKSIVFLVALFPQFI), and 147–167 (FLVLGITTVTIDAIVMFGYTA).

It belongs to the Rht family.

The protein localises to the cell inner membrane. Functionally, involved in positive regulation of motility and negative regulation of biofilm formation. This is an uncharacterized protein from Vibrio cholerae serotype O1 (strain ATCC 39315 / El Tor Inaba N16961).